The sequence spans 273 residues: Replication factor A protein 2 (273 aa).

A compositionally biased stretch (polar residues) spans 1–13 (MATYQPYNEYSSV). The tract at residues 1–38 (MATYQPYNEYSSVTGGGFENSESRPGSGESETNTRVNT) is disordered. Ser27 carries the post-translational modification Phosphoserine. A compositionally biased stretch (polar residues) spans 29-38 (ESETNTRVNT). Positions 69 to 157 (VCFVGVVRNI…NIQYAVIKPI (89 aa)) form a DNA-binding region, OB. Position 122 is a phosphoserine (Ser122).

Belongs to the replication factor A protein 2 family. Heterotrimer of 69, 36, and 13 kDa chains. The DNA-binding activity may reside exclusively on the 69 kDa subunit. Interacts with MCM10. Phosphorylated in a cell cycle-dependent manner with phosphorylation increasing at the entry in S phase and dephosphorylation occurring at mitosis. Post-translationally, the N-terminus is blocked.

The protein resides in the nucleus. Binds to single-stranded sequences participating in DNA replication in addition to those mediating transcriptional repression (URS1) and activation (CAR1). Stimulates the activity of a cognate strand exchange protein (SEP1). It cooperates with T-AG and DNA topoisomerase I to unwind template DNA containing the simian virus 40 origin of DNA replication. The polypeptide is Replication factor A protein 2 (RFA2) (Saccharomyces cerevisiae (strain ATCC 204508 / S288c) (Baker's yeast)).